The primary structure comprises 174 residues: Bifunctional protein PyrR (174 aa).

The PRPP-binding signature appears at 97–109 (VVIVDDVLYTGRT).

It belongs to the purine/pyrimidine phosphoribosyltransferase family. PyrR subfamily. In terms of assembly, homodimer and homohexamer; in equilibrium.

The enzyme catalyses UMP + diphosphate = 5-phospho-alpha-D-ribose 1-diphosphate + uracil. Regulates transcriptional attenuation of the pyrimidine nucleotide (pyr) operon by binding in a uridine-dependent manner to specific sites on pyr mRNA. This disrupts an antiterminator hairpin in the RNA and favors formation of a downstream transcription terminator, leading to a reduced expression of downstream genes. Its function is as follows. Also displays a weak uracil phosphoribosyltransferase activity which is not physiologically significant. The sequence is that of Bifunctional protein PyrR from Macrococcus caseolyticus (strain JCSC5402) (Macrococcoides caseolyticum).